Here is a 518-residue protein sequence, read N- to C-terminus: Lysine--tRNA ligase (518 aa).

The interval 1–28 is disordered; that stretch reads MTEPTQPNAAQPDAARPNVAPEMDDNKI. Glu-428 and Glu-435 together coordinate Mg(2+).

The protein belongs to the class-II aminoacyl-tRNA synthetase family. As to quaternary structure, homodimer. Mg(2+) is required as a cofactor.

The protein resides in the cytoplasm. It carries out the reaction tRNA(Lys) + L-lysine + ATP = L-lysyl-tRNA(Lys) + AMP + diphosphate. The chain is Lysine--tRNA ligase from Paraburkholderia phytofirmans (strain DSM 17436 / LMG 22146 / PsJN) (Burkholderia phytofirmans).